A 778-amino-acid chain; its full sequence is Protection of telomeres protein 1 (778 aa).

Belongs to the telombin family. As to quaternary structure, homodimer or homooligomer. Component of the telomerase ribonucleoprotein complex. Binds single-stranded telomeric DNA as a monomer. Found in a complex with TERF1, TINF2 and TNKS1. Interacts with TNKS1.

Its subcellular location is the nucleus. It localises to the chromosome. It is found in the telomere. In terms of biological role, component of the telomerase ribonucleoprotein (RNP) complex that is essential for the replication of chromosome termini. Is a component of the double-stranded telomeric DNA-binding TRF1 complex that is involved in the regulation of telomere length by cis-inhibition of telomerase. Also acts as a single-stranded telomeric DNA-binding protein and thus may act as a downstream effector of the TRF1 complex and may transduce information about telomere maintenance and/or length to the telomere terminus. Binds to at least two telomeric single-stranded 5'-TTAGGG-3' repeats (G-strand). Its activity is TERT dependent but it does not increase TERT activity. This chain is Protection of telomeres protein 1 (POT1), found in Gallus gallus (Chicken).